Reading from the N-terminus, the 470-residue chain is 3-isopropylmalate dehydratase large subunit (470 aa).

Residues cysteine 348, cysteine 409, and cysteine 412 each contribute to the [4Fe-4S] cluster site.

It belongs to the aconitase/IPM isomerase family. LeuC type 1 subfamily. In terms of assembly, heterodimer of LeuC and LeuD. The cofactor is [4Fe-4S] cluster.

The catalysed reaction is (2R,3S)-3-isopropylmalate = (2S)-2-isopropylmalate. Its pathway is amino-acid biosynthesis; L-leucine biosynthesis; L-leucine from 3-methyl-2-oxobutanoate: step 2/4. Catalyzes the isomerization between 2-isopropylmalate and 3-isopropylmalate, via the formation of 2-isopropylmaleate. This Acidithiobacillus ferrooxidans (strain ATCC 23270 / DSM 14882 / CIP 104768 / NCIMB 8455) (Ferrobacillus ferrooxidans (strain ATCC 23270)) protein is 3-isopropylmalate dehydratase large subunit.